An 803-amino-acid polypeptide reads, in one-letter code: PR domain zinc finger protein 4 (803 aa).

The region spanning 408 to 532 (KQLVLRQSIV…PESELLFYYS (125 aa)) is the SET domain. C2H2-type zinc fingers lie at residues 593–615 (WKCSMCPQAFISPSKLHVHFMGH), 621–643 (HKCDFCSKAFSDPSNLRTHLKIH), 649–671 (YRCTLCDKSFTQKAHLESHMVIH), 677–699 (LKCDYCDKLFMRRQDLKQHVLIH), and 705–727 (IKCPKCDKLFLRTNHLKKHLNSH). The C2H2-type 6; degenerate zinc finger occupies 733–755 (YVCEKCTKAYLTKYHLTRHLKTC). The interval 757–803 (EPSSSSSAQEEEDDESEEEDLADSMRTEDCRMGSAVYSTDESLSAHK) is disordered. Over residues 765–778 (QEEEDDESEEEDLA) the composition is skewed to acidic residues. The span at 792–803 (VYSTDESLSAHK) shows a compositional bias: polar residues.

The protein belongs to the class V-like SAM-binding methyltransferase superfamily.

Its subcellular location is the nucleus. May function as a transcription factor involved in cell differentiation. In Mus musculus (Mouse), this protein is PR domain zinc finger protein 4 (Prdm4).